The following is a 292-amino-acid chain: Phosphatidylserine decarboxylase proenzyme (292 aa).

Residues Asp92, His149, and Ser256 each act as charge relay system; for autoendoproteolytic cleavage activity in the active site. Ser256 (schiff-base intermediate with substrate; via pyruvic acid; for decarboxylase activity) is an active-site residue. Ser256 is subject to Pyruvic acid (Ser); by autocatalysis.

Belongs to the phosphatidylserine decarboxylase family. PSD-B subfamily. Prokaryotic type I sub-subfamily. Heterodimer of a large membrane-associated beta subunit and a small pyruvoyl-containing alpha subunit. Pyruvate serves as cofactor. Is synthesized initially as an inactive proenzyme. Formation of the active enzyme involves a self-maturation process in which the active site pyruvoyl group is generated from an internal serine residue via an autocatalytic post-translational modification. Two non-identical subunits are generated from the proenzyme in this reaction, and the pyruvate is formed at the N-terminus of the alpha chain, which is derived from the carboxyl end of the proenzyme. The autoendoproteolytic cleavage occurs by a canonical serine protease mechanism, in which the side chain hydroxyl group of the serine supplies its oxygen atom to form the C-terminus of the beta chain, while the remainder of the serine residue undergoes an oxidative deamination to produce ammonia and the pyruvoyl prosthetic group on the alpha chain. During this reaction, the Ser that is part of the protease active site of the proenzyme becomes the pyruvoyl prosthetic group, which constitutes an essential element of the active site of the mature decarboxylase.

It is found in the cell membrane. It catalyses the reaction a 1,2-diacyl-sn-glycero-3-phospho-L-serine + H(+) = a 1,2-diacyl-sn-glycero-3-phosphoethanolamine + CO2. Its pathway is phospholipid metabolism; phosphatidylethanolamine biosynthesis; phosphatidylethanolamine from CDP-diacylglycerol: step 2/2. Catalyzes the formation of phosphatidylethanolamine (PtdEtn) from phosphatidylserine (PtdSer). This is Phosphatidylserine decarboxylase proenzyme from Baumannia cicadellinicola subsp. Homalodisca coagulata.